The following is a 590-amino-acid chain: FAD-linked oxidoreductase malF (590 aa).

The first 18 residues, 1–18, serve as a signal peptide directing secretion; sequence MKYTATFALLILAIGIQT. N-linked (GlcNAc...) asparagine glycans are attached at residues N44, N80, N103, N178, and N396. An FAD-binding PCMH-type domain is found at 117-303; it reads AQGRIPLYSA…TSVTLRAFAD (187 aa).

It belongs to the oxygen-dependent FAD-linked oxidoreductase family. It depends on FAD as a cofactor.

Functionally, FAD-linked oxidoreductase; part of the gene cluster that mediates the biosynthesis of malbrancheamide, a dichlorinated fungal indole alkaloid that belongs to a family of natural products containing a characteristic bicyclo[2.2.2]diazaoctane core. The first step of malbrancheamide biosynthesis involves coupling of L-proline and L-tryptophan by malG, a bimodular NRPS, to produce L-Pro-L-Trp aldehyde through reductive offloading. This compound undergoes spontaneous cyclization and dehydration to give a dienamine which is reverse prenylated at C-2 by malE. The other prenyltransferase present in the cluster, malB, displays modest activity, suggesting that may be a redundant gene in the pathway. Subsequently, a [4+2] Diels-Alder cyclo-addition catalyzed by the bifunctional enzyme malC forms the characteristic bicyclo[2.2.2]diazaoctane ring of premalbrancheamid. Finally, the flavin-dependent halogenase malA catalyzes the iterative dichlorination of the indole ring of premalbrancheamide to yield C-9 monochlorinated malbrancheamide B, C-8 monochlorinated isomalbrancheamide B, and dichlorinated malbrancheamide. MalA is also able to brominate premalbrancheamide at C-9 to yield malbrancheamide C, and, to a lesser extend, at C-8 to yield isomalbrancheamide C. Finally, malA can brominate C-9 monochlorinated malbrancheamide B at C-8 to yield malbrancheamide D, or C-8 monochlorinated isomalbrancheamide B at C-9 to produce isomalbrancheamide D. This Malbranchea aurantiaca protein is FAD-linked oxidoreductase malF.